The chain runs to 196 residues: Proteasome subunit beta 2 (196 aa).

A propeptide spans 1 to 6 (MEELPS) (removed in mature form; by autocatalysis). T7 (nucleophile) is an active-site residue.

The protein belongs to the peptidase T1B family. As to quaternary structure, the 20S proteasome core is composed of 14 alpha and 14 beta subunits that assemble into four stacked heptameric rings, resulting in a barrel-shaped structure. The two inner rings, each composed of seven catalytic beta subunits, are sandwiched by two outer rings, each composed of seven alpha subunits. The catalytic chamber with the active sites is on the inside of the barrel. Has a gated structure, the ends of the cylinder being occluded by the N-termini of the alpha-subunits. Is capped at one or both ends by the proteasome regulatory ATPase, PAN.

The protein resides in the cytoplasm. It carries out the reaction Cleavage of peptide bonds with very broad specificity.. With respect to regulation, the formation of the proteasomal ATPase PAN-20S proteasome complex, via the docking of the C-termini of PAN into the intersubunit pockets in the alpha-rings, triggers opening of the gate for substrate entry. Interconversion between the open-gate and close-gate conformations leads to a dynamic regulation of the 20S proteasome proteolysis activity. Functionally, component of the proteasome core, a large protease complex with broad specificity involved in protein degradation. This Metallosphaera sedula (strain ATCC 51363 / DSM 5348 / JCM 9185 / NBRC 15509 / TH2) protein is Proteasome subunit beta 2.